The sequence spans 971 residues: uncharacterized protein (971 aa).

This is an uncharacterized protein from Borreliella burgdorferi (strain ATCC 35210 / DSM 4680 / CIP 102532 / B31) (Borrelia burgdorferi).